Reading from the N-terminus, the 182-residue chain is Acireductone dioxygenase (182 aa).

The Fe(2+) site is built by H100, H102, E106, and H145. 4 residues coordinate Ni(2+): H100, H102, E106, and H145.

This sequence belongs to the acireductone dioxygenase (ARD) family. As to quaternary structure, monomer. The cofactor is Fe(2+). Ni(2+) serves as cofactor.

The catalysed reaction is 1,2-dihydroxy-5-(methylsulfanyl)pent-1-en-3-one + O2 = 3-(methylsulfanyl)propanoate + CO + formate + 2 H(+). The enzyme catalyses 1,2-dihydroxy-5-(methylsulfanyl)pent-1-en-3-one + O2 = 4-methylsulfanyl-2-oxobutanoate + formate + 2 H(+). The protein operates within amino-acid biosynthesis; L-methionine biosynthesis via salvage pathway; L-methionine from S-methyl-5-thio-alpha-D-ribose 1-phosphate: step 5/6. Catalyzes 2 different reactions between oxygen and the acireductone 1,2-dihydroxy-3-keto-5-methylthiopentene (DHK-MTPene) depending upon the metal bound in the active site. Fe-containing acireductone dioxygenase (Fe-ARD) produces formate and 2-keto-4-methylthiobutyrate (KMTB), the alpha-ketoacid precursor of methionine in the methionine recycle pathway. Ni-containing acireductone dioxygenase (Ni-ARD) produces methylthiopropionate, carbon monoxide and formate, and does not lie on the methionine recycle pathway. The protein is Acireductone dioxygenase of Trichormus variabilis (strain ATCC 29413 / PCC 7937) (Anabaena variabilis).